The primary structure comprises 103 residues: Truncated secreted TNF-receptor-like protein A53R (103 aa).

Residues 36 to 73 (SCDKGEYLDKRHNQCCNRCPPGEFAKVRCNGNDNTKCE) form a TNFR-Cys 1 repeat. Disulfide bonds link cysteine 37-cysteine 50, cysteine 51-cysteine 64, and cysteine 54-cysteine 72. One copy of the TNFR-Cys 2; truncated repeat lies at 74-103 (RCPPHTYTTIPIILMDVINVENAQPDHLIR).

It belongs to the poxviridae A53R protein family.

This is Truncated secreted TNF-receptor-like protein A53R from Vaccinia virus (strain Western Reserve) (VACV).